Here is a 202-residue protein sequence, read N- to C-terminus: 3-isopropylmalate dehydratase small subunit (202 aa).

The protein belongs to the LeuD family. LeuD type 1 subfamily. As to quaternary structure, heterodimer of LeuC and LeuD.

The enzyme catalyses (2R,3S)-3-isopropylmalate = (2S)-2-isopropylmalate. It participates in amino-acid biosynthesis; L-leucine biosynthesis; L-leucine from 3-methyl-2-oxobutanoate: step 2/4. Catalyzes the isomerization between 2-isopropylmalate and 3-isopropylmalate, via the formation of 2-isopropylmaleate. The sequence is that of 3-isopropylmalate dehydratase small subunit from Rhizobium etli (strain CIAT 652).